Consider the following 275-residue polypeptide: Urease accessory protein UreD (275 aa).

It belongs to the UreD family. UreD, UreF and UreG form a complex that acts as a GTP-hydrolysis-dependent molecular chaperone, activating the urease apoprotein by helping to assemble the nickel containing metallocenter of UreC. The UreE protein probably delivers the nickel.

The protein resides in the cytoplasm. In terms of biological role, required for maturation of urease via the functional incorporation of the urease nickel metallocenter. In Cereibacter sphaeroides (strain ATCC 17029 / ATH 2.4.9) (Rhodobacter sphaeroides), this protein is Urease accessory protein UreD.